The primary structure comprises 385 residues: cAMP-dependent protein kinase, catalytic subunit-like (385 aa).

Residues 63–317 form the Protein kinase domain; the sequence is LERIVTIGKG…TQDVKDHKWF (255 aa). ATP-binding positions include 69–77 and Lys-92; that span reads IGKGTFGRV. The Proton acceptor role is filled by Asp-186. An AGC-kinase C-terminal domain is found at 318-385; it reads EKVNWDDTLH…QRERDLFAEW (68 aa).

This sequence belongs to the protein kinase superfamily. Ser/Thr protein kinase family. cAMP subfamily.

The catalysed reaction is L-seryl-[protein] + ATP = O-phospho-L-seryl-[protein] + ADP + H(+). The enzyme catalyses L-threonyl-[protein] + ATP = O-phospho-L-threonyl-[protein] + ADP + H(+). The chain is cAMP-dependent protein kinase, catalytic subunit-like from Caenorhabditis briggsae.